Reading from the N-terminus, the 712-residue chain is Patatin-like phospholipase domain-containing protein NFIA_019760 (712 aa).

A compositionally biased stretch (basic and acidic residues) spans Met-1 to Tyr-13. The interval Met-1 to Tyr-21 is disordered. Residues Trp-85–Thr-105 form a helical membrane-spanning segment. The region spanning Leu-275–Asn-466 is the PNPLA domain. Residues Gly-306 to Gly-310 carry the GXSXG motif. The active-site Nucleophile is Ser-308. Asp-453 acts as the Proton acceptor in catalysis. Positions Arg-628–Phe-687 are disordered. Composition is skewed to basic and acidic residues over residues Asp-632–Asp-646 and Arg-652–Glu-664. Residues Val-665–Pro-676 are compositionally biased toward polar residues. The span at His-677 to Phe-687 shows a compositional bias: basic and acidic residues.

This sequence belongs to the PLPL family.

Its subcellular location is the membrane. In terms of biological role, probable lipid hydrolase. The polypeptide is Patatin-like phospholipase domain-containing protein NFIA_019760 (Neosartorya fischeri (strain ATCC 1020 / DSM 3700 / CBS 544.65 / FGSC A1164 / JCM 1740 / NRRL 181 / WB 181) (Aspergillus fischerianus)).